Here is a 587-residue protein sequence, read N- to C-terminus: Kelch-like ECH-associated protein 1B (587 aa).

Residues 44-117 (CDVTLRVRYC…AYTASISVGE (74 aa)) form the BTB domain. Residues 153-253 (IGIASFAEQI…LTPHFLQRQL (101 aa)) form the BACK domain. Kelch repeat units lie at residues 292–337 (LIYT…VISG), 338–388 (LLYA…VIDG), 389–435 (MIYA…VINR), 436–482 (LLYA…ALGN), 484–529 (IYVM…THHG), and 530–576 (RIYV…VTME).

This sequence belongs to the KEAP1 family. Homodimer and heterodimer; heterodimerizes with keap1a. Component of the BCR(KEAP1) E3 ubiquitin ligase complex, at least composed of 2 molecules of cul3, 2 molecules of keap1 (keap1a and/or keap1b), and rbx1. Interacts with nfe2l2/nrf2; the interaction is direct. Non-enzymatic covalent modifications of reactive cysteines by electrophile metabolites inactivate the BCR(KEAP1) complex. As to expression, widely expressed.

The protein localises to the cytoplasm. Its subcellular location is the nucleus. The protein operates within protein modification; protein ubiquitination. Its activity is regulated as follows. Ubiquitin ligase activity of the BCR(KEAP1) complex is inhibited by oxidative stress and electrophile metabolites such as sulforaphane. Electrophile metabolites react with reactive cysteine residues in keap1 and trigger non-enzymatic covalent modifications of these cysteine residues, leading to inactivate the ubiquitin ligase activity of the BCR(KEAP1) complex. Its function is as follows. Substrate-specific adapter of a BCR (BTB-CUL3-RBX1) E3 ubiquitin ligase complex that regulates the response to oxidative stress by targeting nfe2l2/nrf2 for ubiquitination. Keap1 acts as a key sensor of oxidative and electrophilic stress: in normal conditions, the BCR(KEAP1) complex mediates ubiquitination and degradation of nfe2l2/nrf2, a transcription factor regulating expression of many cytoprotective genes. In response to oxidative stress, different electrophile metabolites trigger non-enzymatic covalent modifications of highly reactive cysteine residues in KEAP1, leading to inactivate the ubiquitin ligase activity of the BCR(KEAP1) complex, promoting nfe2l2/nrf2 nuclear accumulation and expression of phase II detoxifying enzymes. This chain is Kelch-like ECH-associated protein 1B, found in Danio rerio (Zebrafish).